The chain runs to 290 residues: Signal peptidase I (290 aa).

The Cytoplasmic portion of the chain corresponds to 1–13 (MKFLRSVYAFCSS). The helical transmembrane segment at 14-34 (WVGTIIIVLLVIFFIAQAFII) threads the bilayer. Residues 35-290 (PSRSMVGTLY…KIIKKEKATH (256 aa)) lie on the Extracellular side of the membrane. Active-site residues include Ser-38 and Lys-106.

Belongs to the peptidase S26 family.

The protein localises to the cell membrane. The enzyme catalyses Cleavage of hydrophobic, N-terminal signal or leader sequences from secreted and periplasmic proteins.. This is Signal peptidase I (lepB) from Helicobacter pylori (strain J99 / ATCC 700824) (Campylobacter pylori J99).